The primary structure comprises 87 residues: Large ribosomal subunit protein bL27 (87 aa).

The interval 1-21 (MAHKKAGGSSRNGRDSESKRL) is disordered.

Belongs to the bacterial ribosomal protein bL27 family.

This is Large ribosomal subunit protein bL27 from Burkholderia mallei (strain NCTC 10247).